The chain runs to 229 residues: PKHD-type hydroxylase BBta_1313 (229 aa).

In terms of domain architecture, Fe2OG dioxygenase spans 78-180; that stretch reads HIFPPLFNRY…RIASFFWLQS (103 aa). Positions 98, 100, and 161 each coordinate Fe cation. Arginine 171 lines the 2-oxoglutarate pocket.

Requires Fe(2+) as cofactor. L-ascorbate serves as cofactor.

The protein is PKHD-type hydroxylase BBta_1313 of Bradyrhizobium sp. (strain BTAi1 / ATCC BAA-1182).